The sequence spans 72 residues: UPF0270 protein YheU (72 aa).

Belongs to the UPF0270 family.

The sequence is that of UPF0270 protein YheU from Shigella dysenteriae serotype 1 (strain Sd197).